The following is a 306-amino-acid chain: Palmitoyl-protein thioesterase ABHD10, mitochondrial (306 aa).

The N-terminal 52 residues, 1 to 52 (MAVARLAAVAAWVPCRSWGCAAVPFGPHRGLSALLARIPQRAPRWLPACRQK), are a transit peptide targeting the mitochondrion. One can recognise an AB hydrolase-1 domain in the interval 78 to 177 (IIFIPGYLSY…KVVALLGVAT (100 aa)). Residues Ser152, Asp249, and His279 each act as charge relay system in the active site.

This sequence belongs to the AB hydrolase superfamily.

The protein resides in the mitochondrion. The enzyme catalyses S-hexadecanoyl-L-cysteinyl-[protein] + H2O = L-cysteinyl-[protein] + hexadecanoate + H(+). It carries out the reaction mycophenolic acid O-acyl-beta-D-glucuronide + H2O = mycophenolate + D-glucuronate + H(+). Its activity is regulated as follows. Inhibited by palmostatin-B. Its function is as follows. Acts as an acyl-protein thioesterase that hydrolyzes fatty acids from acylated residues in proteins. Regulates the mitochondrial S-depalmitoylation of the nucleophilic active site residue of peroxiredoxin-5/PRDX5, a key antioxidant protein, therefore modulating mitochondrial antioxidant ability. Also catalyzes the deglucuronidation of mycophenolic acid acyl-glucuronide, an active metabolite of the immunosuppressant drug mycophenolate. In Pongo abelii (Sumatran orangutan), this protein is Palmitoyl-protein thioesterase ABHD10, mitochondrial (ABHD10).